A 31-amino-acid chain; its full sequence is Ranatuerin-2Ca (31 aa).

Cys-24 and Cys-29 are joined by a disulfide.

As to expression, expressed by the skin glands.

It localises to the secreted. Its function is as follows. Antibacterial activity against Gram-positive bacterium S.aureus and Gram-negative bacterium E.coli. Has activity against C.albicans. This Lithobates clamitans (Green frog) protein is Ranatuerin-2Ca.